We begin with the raw amino-acid sequence, 397 residues long: Lysophospholipid transporter LplT (397 aa).

Residues 1–17 (MSESVHTNTSLWSKGMK) are Periplasmic-facing. A helical membrane pass occupies residues 18 to 38 (AVIVAQFLSAFGDNALLFATL). The Cytoplasmic portion of the chain corresponds to 39 to 52 (ALLKAQFYPEWSQP). Residues 53-73 (ILQMVFVGAYILFAPFVGQVA) traverse the membrane as a helical segment. Residues 74-90 (DSFAKGRVMMFANGLKL) are Periplasmic-facing. Residues 91–111 (LGAASICFGINPFLGYTLVGV) form a helical membrane-spanning segment. Topologically, residues 112–144 (GAAAYSPAKYGILGELTTGSKLVKANGLMEAST) are cytoplasmic. The chain crosses the membrane as a helical span at residues 145–165 (IAAILLGSVAGGVLADWHVLV). A topological domain (periplasmic) is located at residue Ala166. The helical transmembrane segment at 167-187 (LAACALAYGGAVVANIYIPKL) threads the bilayer. Residues 188–226 (AAARPGQSWNLINMTRSFLNACTSLWRNGETRFSLVGTS) lie on the Cytoplasmic side of the membrane. The helical transmembrane segment at 227–247 (LFWGAGVTLRFLLVLWVPVAL) threads the bilayer. Residues 248-256 (GITDNATPT) are Periplasmic-facing. Residues 257–277 (YLNAMVAIGIVVGAGAAAKLV) traverse the membrane as a helical segment. Residues 278–280 (TLE) are Cytoplasmic-facing. The helical transmembrane segment at 281-301 (TVSRCMPAGILIGVVVLIFSL) threads the bilayer. The Periplasmic segment spans residues 302-304 (QHE). Residues 305 to 325 (QLPAYALLMLIGVLGGFFVVP) traverse the membrane as a helical segment. Topologically, residues 326 to 343 (LNALLQERGKKSVGAGNA) are cytoplasmic. The chain crosses the membrane as a helical span at residues 344–364 (IAVQNLGENSAMLLMLGIYSL). Over 365–366 (AV) the chain is Periplasmic. The chain crosses the membrane as a helical span at residues 367–387 (MVGIPVVPIGIGFGALFALAI). Residues 388-397 (TALWIWQRRH) are Cytoplasmic-facing.

This sequence belongs to the major facilitator superfamily. LplT (TC 2.A.1.42) family.

The protein localises to the cell inner membrane. Functionally, catalyzes the facilitated diffusion of 2-acyl-glycero-3-phosphoethanolamine (2-acyl-GPE) into the cell. This Escherichia coli O157:H7 (strain EC4115 / EHEC) protein is Lysophospholipid transporter LplT.